The sequence spans 857 residues: Major vault protein (857 aa).

MVP repeat units follow at residues 18 to 60 (PYYY…ITIP), 62 to 122 (RHYC…KVVQ), 123 to 174 (ANAA…TIIR), 175 to 227 (PNQA…YVLT), 228 to 282 (EKNA…NTLT), 284 to 332 (RQYC…FILG), 333 to 387 (EDEG…IPLD), and 388 to 441 (ENEG…VAER). Residues 434–453 (AKDPVAERSDRRGDRAAPRA) form a disordered region. Residues 437 to 453 (PVAERSDRRGDRAAPRA) are compositionally biased toward basic and acidic residues. Residues 665-694 (ARHEAERLEQEARGRLERQKIMDEAEAEKS) form the IQ domain.

In terms of assembly, the vault ribonucleoprotein particle is a huge (400 A x 670 A) cage structure of 12.9 MDa. It consists of a dimer of half-vaults, with each half-vault comprising 39 identical major vault protein (MVP) chains, PARP4 and one or more vault RNAs (vRNAs). In terms of tissue distribution, expressed in embryos, tube feet and coelomocytes (at protein level). Not expressed in sperm cells (at protein level).

The protein localises to the cytoplasm. The protein resides in the nucleus. Its function is as follows. Required for normal vault structure. Vaults are multi-subunit structures that may act as scaffolds for proteins involved in signal transduction. Vaults may also play a role in nucleo-cytoplasmic transport. This chain is Major vault protein, found in Strongylocentrotus purpuratus (Purple sea urchin).